Here is a 146-residue protein sequence, read N- to C-terminus: Single-stranded DNA-binding protein, mitochondrial (146 aa).

A mitochondrion-targeting transit peptide spans 1–16 (MLRNASAQILKQFVRH). The 112-residue stretch at 29–140 (INKVQILGRV…IIADNIVFLS (112 aa)) folds into the SSB domain.

Its subcellular location is the mitochondrion. The protein localises to the mitochondrion matrix. The protein resides in the mitochondrion nucleoid. Its function is as follows. Binds preferentially and cooperatively to pyrimidine rich single-stranded DNA (ss-DNA). May be required to maintain the copy number of mitochondrial DNA (mtDNA) and play a crucial role during mtDNA replication. Required for retinal ganglion cell differentiation and retinal integrity. This is Single-stranded DNA-binding protein, mitochondrial from Danio rerio (Zebrafish).